Here is a 361-residue protein sequence, read N- to C-terminus: Putative pumilio homolog 22 (361 aa).

The PUM-HD domain occupies 5 to 348; sequence RGYDLASQVL…NIVAIIDSET (344 aa). Pumilio repeat units follow at residues 27 to 63 and 64 to 103; these read HITYRHLLVLSSDDNGCVILKKVITIADDFLKDEFLD and LIAQHAHSLSMHDLGISLIQHVLELDFTKKTTQDDKRLHE. The stretch at 104 to 131 is one Pumilio 3; degenerate repeat; it reads LMAEFDEVLSTSVTADVDKLHKLASKLM. The stretch at 132 to 167 is one Pumilio 4 repeat; the sequence is LDSDLFFEFVITRRGSLMIQIILGKSEEVDQVILAG. One copy of the Pumilio 5; degenerate repeat lies at 168–205; it reads VKQRFIDVTTNFYGYRIMIQTIKVFKKRGDLKVYDQIL. One copy of the Pumilio 6; degenerate repeat lies at 206–243; sequence RLIGVHALYLTKDPDMGNKTFQHAINLHHQDCTTFIAC. 2 Pumilio repeats span residues 244–284 and 285–319; these read GLQS…EIVK and CDEDTLVRLATDEYGNNILKKFLALAKEHKEDFFG.

The protein localises to the cytoplasm. In terms of biological role, sequence-specific RNA-binding protein that regulates translation and mRNA stability by binding the 3'-UTR of target mRNAs. The sequence is that of Putative pumilio homolog 22 (APUM22) from Arabidopsis thaliana (Mouse-ear cress).